Reading from the N-terminus, the 217-residue chain is MTDSVQTPDVPLLDAVQARLLGCLVEKEATTPDTYPLTVNAAQSAANQKTAREPVMNIDAGSVQHALRQLEALGLARQHFSSRADRYEHRLQAALDLTRQQTVLLALLLLRGPQTLGELITRSERLHRFADTDEARHAIERLQQRALLVVLPRASGQREDRYMHLLCGEVDGAALAARYASSGGGSSDAADPGLAERVAQLEAAVAELQAQLAELRG.

Belongs to the UPF0502 family.

In Stenotrophomonas maltophilia (strain K279a), this protein is UPF0502 protein Smlt0097.